A 220-amino-acid chain; its full sequence is Ribosome maturation factor RimP (220 aa).

Residues 1-15 are compositionally biased toward low complexity; the sequence is MSQRGRATRPTGPTG. Disordered stretches follow at residues 1 to 35 and 184 to 220; these read MSQRGRATRPTGPTGRPRRTGGQRSAGRVSRGGDL and PGRVQVEFTRPGETDGADGADEAGDFDDDDDVEGEER. The span at 198-220 shows a compositional bias: acidic residues; it reads DGADGADEAGDFDDDDDVEGEER.

The protein belongs to the RimP family.

The protein localises to the cytoplasm. In terms of biological role, required for maturation of 30S ribosomal subunits. This is Ribosome maturation factor RimP from Salinispora tropica (strain ATCC BAA-916 / DSM 44818 / JCM 13857 / NBRC 105044 / CNB-440).